Here is a 149-residue protein sequence, read N- to C-terminus: Large ribosomal subunit protein bL9 (149 aa).

Belongs to the bacterial ribosomal protein bL9 family.

Its function is as follows. Binds to the 23S rRNA. The chain is Large ribosomal subunit protein bL9 from Xylella fastidiosa (strain 9a5c).